Reading from the N-terminus, the 200-residue chain is Peptidyl-tRNA hydrolase (200 aa).

Y15 is a tRNA binding site. Catalysis depends on H20, which acts as the Proton acceptor. TRNA is bound by residues Y66, N68, and N114.

Belongs to the PTH family. Monomer.

It is found in the cytoplasm. It carries out the reaction an N-acyl-L-alpha-aminoacyl-tRNA + H2O = an N-acyl-L-amino acid + a tRNA + H(+). Hydrolyzes ribosome-free peptidyl-tRNAs (with 1 or more amino acids incorporated), which drop off the ribosome during protein synthesis, or as a result of ribosome stalling. Its function is as follows. Catalyzes the release of premature peptidyl moieties from peptidyl-tRNA molecules trapped in stalled 50S ribosomal subunits, and thus maintains levels of free tRNAs and 50S ribosomes. The protein is Peptidyl-tRNA hydrolase of Paraburkholderia phymatum (strain DSM 17167 / CIP 108236 / LMG 21445 / STM815) (Burkholderia phymatum).